A 111-amino-acid chain; its full sequence is PHD finger-like domain-containing protein 5A (111 aa).

Belongs to the PHF5 family.

The protein is PHD finger-like domain-containing protein 5A of Drosophila melanogaster (Fruit fly).